The chain runs to 534 residues: GMP synthase [glutamine-hydrolyzing] (534 aa).

The Glutamine amidotransferase type-1 domain occupies 20–210; sequence MLIILDFGSQ…VYHICDCEPT (191 aa). The active-site Nucleophile is Cys-97. Residues His-184 and Glu-186 contribute to the active site. One can recognise a GMPS ATP-PPase domain in the interval 211–409; it reads WTTETFVEEA…LGLPEEIVKR (199 aa). 238 to 244 lines the ATP pocket; the sequence is SGGVDSS.

In terms of assembly, homodimer.

It catalyses the reaction XMP + L-glutamine + ATP + H2O = GMP + L-glutamate + AMP + diphosphate + 2 H(+). It functions in the pathway purine metabolism; GMP biosynthesis; GMP from XMP (L-Gln route): step 1/1. In terms of biological role, catalyzes the synthesis of GMP from XMP. The polypeptide is GMP synthase [glutamine-hydrolyzing] (Synechococcus sp. (strain ATCC 27144 / PCC 6301 / SAUG 1402/1) (Anacystis nidulans)).